The chain runs to 447 residues: Beclin-1 (447 aa).

A BH3 motif is present at residues 105-124 (TMENLSRRLKVTSNLFDIMS). The tract at residues 109–156 (LSRRLKVTSNLFDIMSGQTDIDHPLCEECTDTLLDHLDTQLNITENEC) is interaction with BCL2 and BCL2L1 isoform Bcl-X(L). Residues 140–214 (TLLDHLDTQL…VAKELDEGRN (75 aa)) adopt a coiled-coil conformation. The interval 242–447 (DDLKSVDNQM…AWVSSQFYNR (206 aa)) is evolutionary conserved domain (ECD). A Glycyl lysine isopeptide (Lys-Gly) (interchain with G-Cter in ubiquitin) cross-link involves residue lysine 399. Residues 422-447 (WTKALKFMLTNLKWGLAWVSSQFYNR) are required for membrane-association.

Belongs to the beclin family. As to quaternary structure, component of the PI3K (PI3KC3/PI3K-III/class III phosphatidylinositol 3-kinase) complex. Interacts with the poly-Gln domain of ATXN3; the interaction causes deubiquitination at Lys-399 and stabilizes BECN1. Polyubiquitinated at Lys-399 with 'Lys-48'-linkages. 'Lys-48'-linked polyubiquitination of Lys-399 leads to degradation. Deubiquitinated by ATXN3, leading to stabilization.

It is found in the cytoplasm. The protein resides in the golgi apparatus. It localises to the trans-Golgi network membrane. Its subcellular location is the endosome membrane. The protein localises to the endoplasmic reticulum membrane. It is found in the mitochondrion membrane. The protein resides in the endosome. It localises to the cytoplasmic vesicle. Its subcellular location is the autophagosome. In terms of biological role, plays a central role in autophagy. Acts as a core subunit of different PI3K complex forms that mediate formation of phosphatidylinositol 3-phosphate and are believed to play a role in multiple membrane trafficking pathways: PI3KC3-C1 is involved in initiation of autophagosomes and PI3KC3-C2 in maturation of autophagosomes and endocytosis. Involved in regulation of degradative endocytic trafficking and required for the abscission step in cytokinesis, probably in the context of PI3KC3-C2. Essential for the formation of PI3KC3-C2 but not PI3KC3-C1 PI3K complex forms. Involved in endocytosis including endosome formation in neuronal cells. The protein is Beclin-1 (becn1) of Danio rerio (Zebrafish).